The chain runs to 264 residues: Apolipoprotein A-I (264 aa).

The N-terminal stretch at 1–18 (MKAVVLAVAVLFLTGSQA) is a signal peptide. A run of 2 repeats spans residues 67–88 (LKLV…EQLG) and 89–110 (PVTQ…EEMN). Positions 67 to 264 (LKLVDNWDTV…DETSKRLSTQ (198 aa)) are 10 X approximate tandem repeats. Methionine 109 carries the methionine sulfoxide modification. One copy of the 3; half-length repeat lies at 111 to 121 (KDLEEVKKQVQ). Repeat copies occupy residues 122-143 (PYLD…QKVG), 144-165 (PLGA…ERLV), and 166-187 (PVGE…SNLS). A 7; truncated repeat occupies 188–207 (PYSDKMRERLAQHLAKLKDS). At methionine 193 the chain carries Methionine sulfoxide. The stretch at 208 to 229 (TTLAEYRTKASNHLQTLSEKAK) is repeat 8. A 9; half-length repeat occupies 230 to 240 (PALEDLRQGLT). The stretch at 241-264 (PMLESFRATIMGWIDETSKRLSTQ) is repeat 10. Methionine 242 is modified (methionine sulfoxide).

Belongs to the apolipoprotein A1/A4/E family. Homodimer. Interacts with APOA1BP and CLU. Component of a sperm activating protein complex (SPAP), consisting of APOA1, an immunoglobulin heavy chain, an immunoglobulin light chain and albumin. Interacts with NDRG1. Interacts with SCGB3A2. Interacts with NAXE and YJEFN3. Glycosylated. Post-translationally, palmitoylated. In terms of processing, phosphorylation sites are present in the extracellular medium.

Its subcellular location is the secreted. In terms of biological role, participates in the reverse transport of cholesterol from tissues to the liver for excretion by promoting cholesterol efflux from tissues and by acting as a cofactor for the lecithin cholesterol acyltransferase (LCAT). As part of the SPAP complex, activates spermatozoa motility. The protein is Apolipoprotein A-I (Apoa1) of Peromyscus maniculatus bairdii (Prairie deer mouse).